We begin with the raw amino-acid sequence, 454 residues long: Ribosomal protein uS12 methylthiotransferase RimO (454 aa).

The MTTase N-terminal domain occupies 14–125; that stretch reads SKIAFSHVGC…IAKVLDRVEK (112 aa). 6 residues coordinate [4Fe-4S] cluster: cysteine 23, cysteine 59, cysteine 88, cysteine 163, cysteine 167, and cysteine 170. The region spanning 149–378 is the Radical SAM core domain; it reads DKNKFVAYLR…ISVQQNISRE (230 aa). The 72-residue stretch at 381 to 452 folds into the TRAM domain; sequence QIYVGSKMKI…EYDLYGETIK (72 aa).

Belongs to the methylthiotransferase family. RimO subfamily. It depends on [4Fe-4S] cluster as a cofactor.

Its subcellular location is the cytoplasm. The enzyme catalyses L-aspartate(89)-[ribosomal protein uS12]-hydrogen + (sulfur carrier)-SH + AH2 + 2 S-adenosyl-L-methionine = 3-methylsulfanyl-L-aspartate(89)-[ribosomal protein uS12]-hydrogen + (sulfur carrier)-H + 5'-deoxyadenosine + L-methionine + A + S-adenosyl-L-homocysteine + 2 H(+). Its function is as follows. Catalyzes the methylthiolation of an aspartic acid residue of ribosomal protein uS12. In Prochlorococcus marinus (strain MIT 9301), this protein is Ribosomal protein uS12 methylthiotransferase RimO.